The chain runs to 147 residues: uncharacterized protein (147 aa).

An N-acetyltransferase domain is found at Met-1–Glu-147.

The protein belongs to the acetyltransferase family.

This is an uncharacterized protein from Archaeoglobus fulgidus (strain ATCC 49558 / DSM 4304 / JCM 9628 / NBRC 100126 / VC-16).